We begin with the raw amino-acid sequence, 228 residues long: Peptide deformylase (228 aa).

Disordered stretches follow at residues 1 to 28 (MSQDRRYTGCNTHSNTHSAQDREKEGAV) and 116 to 138 (GVPKRQTNKQQANNSTSCDEPDR). 2 stretches are compositionally biased toward polar residues: residues 8 to 18 (TGCNTHSNTHS) and 123 to 133 (NKQQANNSTSC). 2 residues coordinate Fe cation: cysteine 141 and histidine 183. Glutamate 184 is an active-site residue. Residue histidine 187 participates in Fe cation binding.

This sequence belongs to the polypeptide deformylase family. Fe(2+) is required as a cofactor.

The catalysed reaction is N-terminal N-formyl-L-methionyl-[peptide] + H2O = N-terminal L-methionyl-[peptide] + formate. Functionally, removes the formyl group from the N-terminal Met of newly synthesized proteins. Requires at least a dipeptide for an efficient rate of reaction. N-terminal L-methionine is a prerequisite for activity but the enzyme has broad specificity at other positions. The protein is Peptide deformylase of Tropheryma whipplei (strain Twist) (Whipple's bacillus).